Here is a 454-residue protein sequence, read N- to C-terminus: tRNA modification GTPase MnmE (454 aa).

(6S)-5-formyl-5,6,7,8-tetrahydrofolate contacts are provided by arginine 23, glutamate 80, and lysine 120. In terms of domain architecture, TrmE-type G spans 216 to 377; it reads GMKVVIAGRP…LRNHLKQSMG (162 aa). Asparagine 226 contributes to the K(+) binding site. GTP is bound by residues 226 to 231, 245 to 251, 270 to 273, 335 to 338, and 358 to 360; these read NAGKSS, TDIAGTT, DTAG, NKAD, and SAR. Mg(2+) is bound at residue serine 230. K(+) contacts are provided by threonine 245, isoleucine 247, and threonine 250. Residue threonine 251 coordinates Mg(2+). A (6S)-5-formyl-5,6,7,8-tetrahydrofolate-binding site is contributed by lysine 454.

Belongs to the TRAFAC class TrmE-Era-EngA-EngB-Septin-like GTPase superfamily. TrmE GTPase family. As to quaternary structure, homodimer. Heterotetramer of two MnmE and two MnmG subunits. Requires K(+) as cofactor.

It localises to the cytoplasm. Exhibits a very high intrinsic GTPase hydrolysis rate. Involved in the addition of a carboxymethylaminomethyl (cmnm) group at the wobble position (U34) of certain tRNAs, forming tRNA-cmnm(5)s(2)U34. In Shigella dysenteriae serotype 1 (strain Sd197), this protein is tRNA modification GTPase MnmE.